A 122-amino-acid chain; its full sequence is Large ribosomal subunit protein uL18 (122 aa).

The protein belongs to the universal ribosomal protein uL18 family. As to quaternary structure, part of the 50S ribosomal subunit; part of the 5S rRNA/L5/L18/L25 subcomplex. Contacts the 5S and 23S rRNAs.

In terms of biological role, this is one of the proteins that bind and probably mediate the attachment of the 5S RNA into the large ribosomal subunit, where it forms part of the central protuberance. The chain is Large ribosomal subunit protein uL18 from Geotalea uraniireducens (strain Rf4) (Geobacter uraniireducens).